The following is a 270-amino-acid chain: 4-hydroxy-tetrahydrodipicolinate reductase (270 aa).

NAD(+)-binding positions include 9–14 (GAGGRM) and E35. Residue R36 participates in NADP(+) binding. Residues 99 to 101 (GTT) and 123 to 126 (ASNY) contribute to the NAD(+) site. The Proton donor/acceptor role is filled by H156. H157 provides a ligand contact to (S)-2,3,4,5-tetrahydrodipicolinate. The Proton donor role is filled by K160. 166–167 (GT) provides a ligand contact to (S)-2,3,4,5-tetrahydrodipicolinate.

It belongs to the DapB family.

The protein localises to the cytoplasm. It carries out the reaction (S)-2,3,4,5-tetrahydrodipicolinate + NAD(+) + H2O = (2S,4S)-4-hydroxy-2,3,4,5-tetrahydrodipicolinate + NADH + H(+). It catalyses the reaction (S)-2,3,4,5-tetrahydrodipicolinate + NADP(+) + H2O = (2S,4S)-4-hydroxy-2,3,4,5-tetrahydrodipicolinate + NADPH + H(+). It participates in amino-acid biosynthesis; L-lysine biosynthesis via DAP pathway; (S)-tetrahydrodipicolinate from L-aspartate: step 4/4. In terms of biological role, catalyzes the conversion of 4-hydroxy-tetrahydrodipicolinate (HTPA) to tetrahydrodipicolinate. This is 4-hydroxy-tetrahydrodipicolinate reductase from Mannheimia succiniciproducens (strain KCTC 0769BP / MBEL55E).